The sequence spans 441 residues: Divalent metal cation transporter MntH (441 aa).

The next 11 membrane-spanning stretches (helical) occupy residues 41 to 61 (TGIA…IGYM), 74 to 94 (AAYG…AMLF), 116 to 136 (HFPA…AMAT), 141 to 161 (FLGG…AGMI), 183 to 203 (AAIA…LMIA), 223 to 243 (AALT…TLYL), 271 to 291 (VVVA…MAAS), 311 to 331 (IPVL…TSGV), 360 to 380 (AVTI…TRAM), 381 to 401 (VASQ…LLIL), and 419 to 439 (IVAG…VWAA).

This sequence belongs to the NRAMP family.

The protein resides in the cell inner membrane. In terms of biological role, h(+)-stimulated, divalent metal cation uptake system. The sequence is that of Divalent metal cation transporter MntH from Burkholderia ambifaria (strain ATCC BAA-244 / DSM 16087 / CCUG 44356 / LMG 19182 / AMMD) (Burkholderia cepacia (strain AMMD)).